Reading from the N-terminus, the 512-residue chain is V-type proton ATPase subunit B (512 aa).

R381 lines the ATP pocket. The interval 484–512 (LYGRDREQDDDEDEDEEDPDKSGDKLIDA) is disordered. Over residues 491–502 (QDDDEDEDEEDP) the composition is skewed to acidic residues. A compositionally biased stretch (basic and acidic residues) spans 503–512 (DKSGDKLIDA).

The protein belongs to the ATPase alpha/beta chains family. V-ATPase is a heteromultimeric enzyme composed of a peripheral catalytic V1 complex (components A to H) attached to an integral membrane V0 proton pore complex (components: a, c, c', c'', d, e, f and VOA1).

The protein resides in the vacuole membrane. Non-catalytic subunit of the V1 complex of vacuolar(H+)-ATPase (V-ATPase), a multisubunit enzyme composed of a peripheral complex (V1) that hydrolyzes ATP and a membrane integral complex (V0) that translocates protons. Plays an important role in resistance to several stresses, as well as in autophagy and virulence. This chain is V-type proton ATPase subunit B, found in Candida albicans (strain SC5314 / ATCC MYA-2876) (Yeast).